We begin with the raw amino-acid sequence, 317 residues long: Mitochondrial thiamine pyrophosphate carrier 1 (317 aa).

Solcar repeat units follow at residues 12 to 110 (GTRR…TTQV), 120 to 206 (PPAL…LRPV), and 214 to 309 (PFGS…SLKL). Transmembrane regions (helical) follow at residues 17 to 35 (VVLS…VAPL), 91 to 107 (LMYV…YRTT), 126 to 146 (FVSG…LDLL), 181 to 198 (GCSA…LFFA), 220 to 240 (AAAG…LDLV), and 284 to 301 (GLTV…ITMW).

It belongs to the mitochondrial carrier (TC 2.A.29) family.

The protein localises to the mitochondrion inner membrane. Its function is as follows. Mitochondrial transporter that mediates uptake of thiamine pyrophosphate (ThPP) into mitochondria. The protein is Mitochondrial thiamine pyrophosphate carrier 1 (tpc1) of Neosartorya fischeri (strain ATCC 1020 / DSM 3700 / CBS 544.65 / FGSC A1164 / JCM 1740 / NRRL 181 / WB 181) (Aspergillus fischerianus).